The sequence spans 468 residues: Neurexin-1-beta (468 aa).

An N-terminal signal peptide occupies residues Met-1–Gly-46. The Extracellular portion of the chain corresponds to Ala-47–Thr-391. The 199-residue stretch at Tyr-87–Val-285 folds into the Laminin G-like domain. Ca(2+) is bound by residues Asp-137 and Val-154. Residue Asn-184 is glycosylated (N-linked (GlcNAc...) asparagine). The interval Gly-201 to Lys-230 is essential for interaction with CBLN1; modulates interaction affinity with NLGN1, NLGN2 and NLGN3; prevents interaction with DAG1/alpha-dystroglycan; modulates interaction with alpha-latrotoxin. Ca(2+)-binding residues include Ile-236 and Asn-238. Residue Ser-346 is glycosylated (O-linked (Xyl...) (heparan sulfate) serine). The tract at residues Pro-350–Ser-381 is disordered. A helical membrane pass occupies residues Thr-392 to Tyr-414. The Cytoplasmic portion of the chain corresponds to Lys-415 to Val-468. Residues Asn-435–Val-468 are disordered. Phosphoserine occurs at positions 450, 451, and 454.

It belongs to the neurexin family. The cytoplasmic C-terminal region binds to CASK. Binds NLGN1, NLGN2 and NLGN3, DAG1 (alpha-dystroglycan) and alpha-latrotoxin. Binding to neuroligins is calcium-dependent, and the binding preference ranks as follow: NLGN1 &gt; NLGN4 &gt;&gt; NLGN3 &gt; NLGN2. Interacts with CBLN2 and more weakly with CBLN4. Interacts with CBLN1; interaction is CBLN1 hexamer form-dependent; CBLN1-binding is calcium-independent; isoform 1b does not interact with CBLN1. Interacts with CLSTN3. In terms of processing, N-glycosylated. Post-translationally, O-glycosylated; contains heparan sulfate. Heparan sulfate attachment is required for synapse development by mediating interactions with neuroligins. In terms of tissue distribution, brain.

It localises to the presynaptic cell membrane. Neuronal cell surface protein involved in cell recognition and cell adhesion by forming intracellular junctions through binding to neuroligins. Plays a role in formation of synaptic junctions. Functions as part of a trans-synaptic complex by binding to cerebellins and postsynaptic GRID1. This interaction helps regulate the activity of NMDA and AMPA receptors at hippocampal synapses without affecting synapse formation. NRXN1B-CBLN2-GRID1 complex transduce presynaptic signals into postsynaptic NMDAR response. The sequence is that of Neurexin-1-beta from Rattus norvegicus (Rat).